The primary structure comprises 494 residues: Transmembrane and coiled-coil domain-containing protein 6 (494 aa).

A coiled-coil region spans residues 15–39 (GVEELRRRRREREAALRKARREQQL). A run of 2 helical transmembrane segments spans residues 338–358 (LVAA…ALLP) and 386–406 (PLLQ…TVLC).

The protein resides in the membrane. This Mus musculus (Mouse) protein is Transmembrane and coiled-coil domain-containing protein 6 (Tmco6).